A 312-amino-acid polypeptide reads, in one-letter code: HTH-type transcriptional regulator PtxR (312 aa).

The HTH lysR-type domain occupies 11–68 (LNLNHLYAFVAVAEHNSFTAAAEALGLSKSLLSEQLRRLEADLGIQLLTRTTRRMTLT). A DNA-binding region (H-T-H motif) is located at residues 28-47 (FTAAAEALGLSKSLLSEQLR).

The protein belongs to the LysR transcriptional regulatory family. Monomer in solution. May dimerize on binding to DNA. Interacts with PtxS in the absence of 2-ketogluconate. Binding of the 2-ketogluconate effector to PtxS causes PtxS/PtxR complex dissociation.

Its activity is regulated as follows. Negatively regulated by PtxS, which interacts with PtxR and prevents its activity. Plays an important role in the regulation of the production of the virulence factor exotoxin A (toxA), via positive regulation of the transcription of the toxA gene. Acts by binding directly to the toxA promoter region. Besides toxA, PtxR modulates the expression of genes that code for the QS-controlled virulence factors. It negatively regulates the expression of the rhamnolipid and pyocyanine genes, through the autoinducer synthase RhlI, and the PQS synthesis operon pqsABCDE, while it positively regulates the expression of lasB through the autoinducer synthase LasI. Also positively regulates the expression of the exotoxin A regulatory protein (toxR or regA). Its function is as follows. In addition, is involved in the positive regulation of glucose metabolism via the regulation of the expression of the kgu and gad operons. Acts by binding directly to the promoter region of the kgu and gad operons. The protein is HTH-type transcriptional regulator PtxR of Pseudomonas aeruginosa (strain ATCC 15692 / DSM 22644 / CIP 104116 / JCM 14847 / LMG 12228 / 1C / PRS 101 / PAO1).